The chain runs to 150 residues: Transcriptional repressor NrdR (150 aa).

A zinc finger spans residues cysteine 3–cysteine 34. One can recognise an ATP-cone domain in the interval leucine 46 to aspartate 136.

The protein belongs to the NrdR family. Requires Zn(2+) as cofactor.

Functionally, negatively regulates transcription of bacterial ribonucleotide reductase nrd genes and operons by binding to NrdR-boxes. This chain is Transcriptional repressor NrdR, found in Corynebacterium glutamicum (strain ATCC 13032 / DSM 20300 / JCM 1318 / BCRC 11384 / CCUG 27702 / LMG 3730 / NBRC 12168 / NCIMB 10025 / NRRL B-2784 / 534).